We begin with the raw amino-acid sequence, 119 residues long: Small ribosomal subunit protein eS25 (119 aa).

The interval 1–42 (MPPKKDTKASAKQPQKTQKKKEGSGGGKAKKKKWSKGKVRDK) is disordered. Residues 28 to 37 (KAKKKKWSKG) show a composition bias toward basic residues.

The protein belongs to the eukaryotic ribosomal protein eS25 family.

The sequence is that of Small ribosomal subunit protein eS25 (RpS25) from Spodoptera frugiperda (Fall armyworm).